Here is a 2051-residue protein sequence, read N- to C-terminus: Fatty acid synthase subunit beta (2051 aa).

An N-acetylmethionine modification is found at Met1. The tract at residues 1–468 (MDAYSTRPLT…VYDTFDGSDL (468 aa)) is acetyltransferase. The For acetyltransferase activity role is filled by Ser274. Residues 480–868 (VDCIIRLPVK…TRGVMLWKEF (389 aa)) are enoyl reductase. Thr733 bears the Phosphothreonine mark. Ser1121 carries the post-translational modification Phosphoserine. Positions 1144–1626 (GSEINWRHAS…LPNTALKTSI (483 aa)) are dehydratase. Residue Lys1364 forms a Glycyl lysine isopeptide (Lys-Gly) (interchain with G-Cter in ubiquitin) linkage. Residues 1523–1648 (NGSTLEQKVN…KFETRNEDDV (126 aa)) form the MaoC-like domain. Residues 1627–1845 (QHVGMINGRK…MTMQVAVPRD (219 aa)) are malonyl/palmitoyl transferase. Ser1808 serves as the catalytic For malonyltransferase activity.

This sequence belongs to the fungal fatty acid synthetase subunit beta family. In terms of assembly, [Alpha(6)beta(6)] hexamers of two multifunctional subunits (alpha and beta).

It catalyses the reaction acetyl-CoA + n malonyl-CoA + 2n NADPH + 4n H(+) = a long-chain-acyl-CoA + n CoA + n CO2 + 2n NADP(+).. The catalysed reaction is holo-[ACP] + acetyl-CoA = acetyl-[ACP] + CoA. It carries out the reaction holo-[ACP] + malonyl-CoA = malonyl-[ACP] + CoA. The enzyme catalyses a (3R)-hydroxyacyl-[ACP] = a (2E)-enoyl-[ACP] + H2O. It catalyses the reaction a 2,3-saturated acyl-[ACP] + NAD(+) = a (2E)-enoyl-[ACP] + NADH + H(+). The catalysed reaction is (9Z)-octadecenoyl-[ACP] + H2O = (9Z)-octadecenoate + holo-[ACP] + H(+). Functionally, fatty acid synthetase catalyzes the formation of long-chain fatty acids from acetyl-CoA, malonyl-CoA and NADPH. The beta subunit contains domains for: [acyl-carrier-protein] acetyltransferase and malonyltransferase, S-acyl fatty acid synthase thioesterase, enoyl-[acyl-carrier-protein] reductase, and 3-hydroxypalmitoyl-[acyl-carrier-protein] dehydratase. In Saccharomyces cerevisiae (strain ATCC 204508 / S288c) (Baker's yeast), this protein is Fatty acid synthase subunit beta (FAS1).